A 63-amino-acid chain; its full sequence is Large ribosomal subunit protein uL30 (63 aa).

Belongs to the universal ribosomal protein uL30 family. Part of the 50S ribosomal subunit.

This Bradyrhizobium sp. (strain BTAi1 / ATCC BAA-1182) protein is Large ribosomal subunit protein uL30.